The sequence spans 135 residues: Flagellar assembly factor FliW 1 (135 aa).

It belongs to the FliW family. As to quaternary structure, interacts with translational regulator CsrA and flagellin(s).

The protein localises to the cytoplasm. Its function is as follows. Acts as an anti-CsrA protein, binds CsrA and prevents it from repressing translation of its target genes, one of which is flagellin. Binds to flagellin and participates in the assembly of the flagellum. This Helicobacter pylori (strain HPAG1) protein is Flagellar assembly factor FliW 1.